Here is a 931-residue protein sequence, read N- to C-terminus: Bifunctional glutamine synthetase adenylyltransferase/adenylyl-removing enzyme (931 aa).

The segment at 1 to 434 is adenylyl removase; it reads MTLAPADLPV…STEFAALLAP (434 aa). Residues 441–931 form an adenylyl transferase region; that stretch reads PDALANYWRS…ACRAAELPFA (491 aa).

It belongs to the GlnE family. Mg(2+) is required as a cofactor.

The enzyme catalyses [glutamine synthetase]-O(4)-(5'-adenylyl)-L-tyrosine + phosphate = [glutamine synthetase]-L-tyrosine + ADP. The catalysed reaction is [glutamine synthetase]-L-tyrosine + ATP = [glutamine synthetase]-O(4)-(5'-adenylyl)-L-tyrosine + diphosphate. Its function is as follows. Involved in the regulation of glutamine synthetase GlnA, a key enzyme in the process to assimilate ammonia. When cellular nitrogen levels are high, the C-terminal adenylyl transferase (AT) inactivates GlnA by covalent transfer of an adenylyl group from ATP to specific tyrosine residue of GlnA, thus reducing its activity. Conversely, when nitrogen levels are low, the N-terminal adenylyl removase (AR) activates GlnA by removing the adenylyl group by phosphorolysis, increasing its activity. The regulatory region of GlnE binds the signal transduction protein PII (GlnB) which indicates the nitrogen status of the cell. This Stenotrophomonas maltophilia (strain K279a) protein is Bifunctional glutamine synthetase adenylyltransferase/adenylyl-removing enzyme.